The sequence spans 328 residues: Tetraacyldisaccharide 4'-kinase (328 aa).

Position 58–65 (58–65 (TMGGAGKT)) interacts with ATP.

The protein belongs to the LpxK family.

It carries out the reaction a lipid A disaccharide + ATP = a lipid IVA + ADP + H(+). The protein operates within glycolipid biosynthesis; lipid IV(A) biosynthesis; lipid IV(A) from (3R)-3-hydroxytetradecanoyl-[acyl-carrier-protein] and UDP-N-acetyl-alpha-D-glucosamine: step 6/6. Functionally, transfers the gamma-phosphate of ATP to the 4'-position of a tetraacyldisaccharide 1-phosphate intermediate (termed DS-1-P) to form tetraacyldisaccharide 1,4'-bis-phosphate (lipid IVA). This Phenylobacterium zucineum (strain HLK1) protein is Tetraacyldisaccharide 4'-kinase.